The primary structure comprises 412 residues: Alpha-1-antiproteinase (412 aa).

The signal sequence occupies residues 1 to 24 (MPSSISWGLLLLAGLCCLAPGSLA). Serine 33 is subject to Phosphoserine. Asparagine 65, asparagine 102, asparagine 165, and asparagine 266 each carry an N-linked (GlcNAc...) asparagine glycan. An RCL region spans residues 368-387 (GVTVLEAIPMSLPPDVRFDR). A Phosphoserine modification is found at serine 378.

This sequence belongs to the serpin family. As to quaternary structure, interacts with CELA2A. Interacts with ERGIC3 and LMAN1/ERGIC53. Interacts with PRSS1/Trypsin. As to expression, plasma.

The protein resides in the secreted. Functionally, inhibitor of serine proteases. The chain is Alpha-1-antiproteinase from Callosciurus caniceps (Gray-bellied squirrel).